The following is a 248-amino-acid chain: Ribonuclease PH (248 aa).

Phosphate is bound by residues Arg-86 and 124–126 (GTR).

It belongs to the RNase PH family. Homohexameric ring arranged as a trimer of dimers.

It catalyses the reaction tRNA(n+1) + phosphate = tRNA(n) + a ribonucleoside 5'-diphosphate. Phosphorolytic 3'-5' exoribonuclease that plays an important role in tRNA 3'-end maturation. Removes nucleotide residues following the 3'-CCA terminus of tRNAs; can also add nucleotides to the ends of RNA molecules by using nucleoside diphosphates as substrates, but this may not be physiologically important. Probably plays a role in initiation of 16S rRNA degradation (leading to ribosome degradation) during starvation. The sequence is that of Ribonuclease PH from Listeria welshimeri serovar 6b (strain ATCC 35897 / DSM 20650 / CCUG 15529 / CIP 8149 / NCTC 11857 / SLCC 5334 / V8).